A 91-amino-acid polypeptide reads, in one-letter code: Small ribosomal subunit protein uS17 (91 aa).

Belongs to the universal ribosomal protein uS17 family. Part of the 30S ribosomal subunit.

Its function is as follows. One of the primary rRNA binding proteins, it binds specifically to the 5'-end of 16S ribosomal RNA. The sequence is that of Small ribosomal subunit protein uS17 from Psychrobacter cryohalolentis (strain ATCC BAA-1226 / DSM 17306 / VKM B-2378 / K5).